The primary structure comprises 442 residues: Serine--tRNA ligase (442 aa).

Residue Thr-249–Glu-251 participates in L-serine binding. Arg-280–Glu-282 serves as a coordination point for ATP. Glu-303 provides a ligand contact to L-serine. Position 367–370 (Glu-367–Ser-370) interacts with ATP. An L-serine-binding site is contributed by Ser-402.

The protein belongs to the class-II aminoacyl-tRNA synthetase family. Type-1 seryl-tRNA synthetase subfamily. As to quaternary structure, homodimer. The tRNA molecule binds across the dimer.

The protein resides in the cytoplasm. It catalyses the reaction tRNA(Ser) + L-serine + ATP = L-seryl-tRNA(Ser) + AMP + diphosphate + H(+). The enzyme catalyses tRNA(Sec) + L-serine + ATP = L-seryl-tRNA(Sec) + AMP + diphosphate + H(+). It functions in the pathway aminoacyl-tRNA biosynthesis; selenocysteinyl-tRNA(Sec) biosynthesis; L-seryl-tRNA(Sec) from L-serine and tRNA(Sec): step 1/1. Its function is as follows. Catalyzes the attachment of serine to tRNA(Ser). Is also able to aminoacylate tRNA(Sec) with serine, to form the misacylated tRNA L-seryl-tRNA(Sec), which will be further converted into selenocysteinyl-tRNA(Sec). The protein is Serine--tRNA ligase of Acidovorax sp. (strain JS42).